The sequence spans 492 residues: Solute carrier family 2, facilitated glucose transporter member 1 (492 aa).

At Met-1 the chain carries N-acetylmethionine. Topologically, residues 1–11 are cytoplasmic; it reads MEPSSKKVTGR. The helical transmembrane segment at 12 to 33 threads the bilayer; the sequence is LMLAVGGAVLGSLQFGYNTGVI. At 34-66 the chain is on the extracellular side; it reads NAPQKVIEEFYNQTWNHRYGESIPSTTLTTLWS. Asn-45 carries an N-linked (GlcNAc...) asparagine glycan. Residues 67 to 87 form a helical membrane-spanning segment; that stretch reads LSVAIFSVGGMIGSFSVGLFV. Residues 88–90 are Cytoplasmic-facing; that stretch reads NRF. The chain crosses the membrane as a helical span at residues 91 to 112; that stretch reads GRRNSMLMMNLLAFVSAVLMGF. Residues 113 to 120 are Extracellular-facing; it reads SKLGKSFE. A helical transmembrane segment spans residues 121-144; it reads MLILGRFIIGVYCGLTTGFVPMYV. At 145–155 the chain is on the cytoplasmic side; sequence GEVSPTALRGA. Residues 156 to 176 traverse the membrane as a helical segment; the sequence is LGTLHQLGIVVGILIAQVFGL. Gln-161 serves as a coordination point for D-glucose. The Extracellular segment spans residues 177 to 185; sequence DSIMGNADL. Residues 186 to 206 traverse the membrane as a helical segment; the sequence is WPLLLSVIFIPALLQCILLPF. Topologically, residues 207–271 are cytoplasmic; that stretch reads CPESPRFLLI…LFRSPAYRQP (65 aa). Ser-226 is subject to Phosphoserine. The helical transmembrane segment at 272–293 threads the bilayer; it reads ILIAVVLQLSQQLSGINAVFYY. D-glucose contacts are provided by residues 282–283 and Asn-288; that span reads QQ. Over 294–306 the chain is Extracellular; sequence STSIFEKAGVQQP. Residues 307-328 traverse the membrane as a helical segment; that stretch reads VYATIGSGIVNTAFTVVSLFVV. Asn-317 contacts D-glucose. The Cytoplasmic segment spans residues 329–334; that stretch reads ERAGRR. The helical transmembrane segment at 335–355 threads the bilayer; that stretch reads TLHLIGLAGMAGCAVLMTIAL. The Extracellular segment spans residues 356–365; it reads ALLEQLPWMS. A helical membrane pass occupies residues 366 to 388; it reads YLSIVAIFGFVAFFEVGPGPIPW. Glu-380 and Trp-388 together coordinate D-glucose. Residues 389-401 are Cytoplasmic-facing; the sequence is FIVAELFSQGPRP. Residues 402-422 traverse the membrane as a helical segment; it reads AAVAVAGFSNWTSNFIVGMCF. The Extracellular portion of the chain corresponds to 423 to 429; the sequence is QYVEQLC. Residues 430–450 traverse the membrane as a helical segment; it reads GPYVFIIFTVLLVLFFIFTYF. At 451–492 the chain is on the cytoplasmic side; the sequence is KVPETKGRTFDEIASGFRQGGASQSDKTPEELFHPLGADSQV. Position 465 is a phosphoserine (Ser-465). Positions 468 to 492 are disordered; it reads RQGGASQSDKTPEELFHPLGADSQV. Residue Thr-478 is modified to Phosphothreonine. Phosphoserine is present on Ser-490.

This sequence belongs to the major facilitator superfamily. Sugar transporter (TC 2.A.1.1) family. Glucose transporter subfamily. Found in a complex with ADD2, DMTN and SLC2A1. Interacts (via C-terminus cytoplasmic region) with DMTN. Interacts with SNX27; the interaction is required when endocytosed to prevent degradation in lysosomes and promote recycling to the plasma membrane. Interacts with STOM. Interacts with GIPC (via PDZ domain). Interacts with SGTA (via Gln-rich region). Interacts with isoform 1 of BSG. Interacts with SMIM43; the interaction may promote SLC2A1-mediated glucose transport to meet the energy needs of mesendoderm differentiation. In terms of processing, phosphorylation at Ser-226 by PKC promotes glucose uptake by increasing cell membrane localization. In terms of tissue distribution, detected in osteoblastic cells (at protein level). Detected in brain, and at lower levels in kidney, heart and lung.

It localises to the cell membrane. The protein resides in the photoreceptor inner segment. The catalysed reaction is D-glucose(out) = D-glucose(in). Its activity is regulated as follows. The uptake of glucose is inhibited by cytochalasin B. Glucose uptake is increased in response to phorbol ester 12-O-tetradecanoylphorbol-13-acetate (TPA) treatment: TPA-induced glucose uptake requires phosphorylation at Ser-226. Its function is as follows. Facilitative glucose transporter, which is responsible for constitutive or basal glucose uptake. Has a very broad substrate specificity; can transport a wide range of aldoses including both pentoses and hexoses. Most important energy carrier of the brain: present at the blood-brain barrier and assures the energy-independent, facilitative transport of glucose into the brain. In association with BSG and NXNL1, promotes retinal cone survival by increasing glucose uptake into photoreceptors. Required for mesendoderm differentiation. The chain is Solute carrier family 2, facilitated glucose transporter member 1 from Rattus norvegicus (Rat).